Here is a 595-residue protein sequence, read N- to C-terminus: Estrogen receptor (595 aa).

The tract at residues 1 to 184 (MTMTLHTKAS…AMESAKETRY (184 aa)) is modulating (transactivation AF-1); mediates interaction with MACROD1. A glycan (O-linked (GlcNAc) serine) is linked at Ser-10. Residues 35–47 (LERPLGEVYVDSS) are required for interaction with NCOA1. The tract at residues 35–174 (LERPLGEVYV…LASTSDKGSM (140 aa)) is interaction with DDX5; self-association. Phosphoserine; by CDK2 is present on residues Ser-104 and Ser-106. The residue at position 118 (Ser-118) is a Phosphoserine. Residues 144–174 (AGPPAFYRPNSDNRRQGGRERLASTSDKGSM) form a disordered region. Basic and acidic residues predominate over residues 154 to 165 (SDNRRQGGRERL). Ser-167 is subject to Phosphoserine; by CK2. NR C4-type zinc fingers lie at residues 185–205 (CAVC…CEGC) and 221–245 (CPAT…LRKC). Positions 185–250 (CAVCNDYASG…RLRKCYEVGM (66 aa)) form a DNA-binding region, nuclear receptor. Residues 185–310 (CAVCNDYASG…TKKNSPVLSL (126 aa)) are mediates interaction with DNTTIP2. Positions 251 to 310 (MKGGIRKDRRGGRMLKHKRQRDDGEGRNEAVPPGDMRSANLWPSPLLIKHTKKNSPVLSL) are hinge. Residues 257 to 269 (KDRRGGRMLKHKR) show a composition bias toward basic residues. Positions 257-288 (KDRRGGRMLKHKRQRDDGEGRNEAVPPGDMRS) are disordered. Residue Arg-260 is modified to Asymmetric dimethylarginine; by PRMT1. An interaction with AKAP13 region spans residues 262–595 (GRMLKHKRQR…GEAENFPTTI (334 aa)). Positions 264–594 (MLKHKRQRDD…TGEAENFPTT (331 aa)) are self-association. The region spanning 311–547 (TADQMISALL…DLLLEMLDAH (237 aa)) is the NR LBD domain. A transactivation AF-2 region spans residues 311–594 (TADQMISALL…TGEAENFPTT (284 aa)). Residues Glu-353 and Arg-394 each coordinate 17beta-estradiol. Cys-447 is lipidated: S-palmitoyl cysteine. His-524 serves as a coordination point for 17beta-estradiol. Tyr-537 carries the phosphotyrosine; by Tyr-kinases modification. Residues 551 to 575 (APTNLGGPPPEDMSQSQLATSGSTP) form a disordered region. Over residues 563-575 (MSQSQLATSGSTP) the composition is skewed to polar residues.

The protein belongs to the nuclear hormone receptor family. NR3 subfamily. In terms of assembly, binds DNA as a homodimer. Can form a heterodimer with ESR2. Interacts with coactivator NCOA5. Interacts with PELP1, the interaction is enhanced by 17-beta-estradiol; the interaction increases ESR1 transcriptional activity. Interacts with NCOA7; the interaction is ligand-inducible. Interacts with AKAP13, CUEDC2, HEXIM1, KDM5A, MAP1S, SMARD1, and UBE1C. Interacts with MUC1; the interaction is stimulated by 7 beta-estradiol (E2) and enhances ESR1-mediated transcription. Interacts with DNTTIP2, and UIMC1. Interacts with KMT2D/MLL2. Interacts with ATAD2; the interaction is enhanced by estradiol. Interacts with KIF18A and LDB1. Interacts with RLIM (via its C-terminus). Interacts with MACROD1. Interacts with SH2D4A and PLCG. Interacts with SH2D4A; the interaction blocks binding to PLCG and inhibits estrogen-induced cell proliferation. Interacts with DYNLL1. Interacts with CCDC62; the interaction requires estradiol and appears to enhance the transcription of target genes. Interacts with NR2C1; the interaction prevents homodimerization of ESR1 and suppresses its transcriptional activity and cell growth. Interacts with DNAAF4. Interacts with PRMT2. Interacts with RBFOX2. Interacts with EP300; the interaction is estrogen-dependent and enhanced by CITED1. Interacts with CITED1; the interaction is estrogen-dependent. Interacts with FAM120B, FOXL2, PHB2 and SLC30A9. Interacts with coactivators NCOA3 and NCOA6. Interacts with STK3/MST2 only in the presence of SAV1 and vice-versa. Binds to CSNK1D. Interacts with NCOA2; NCOA2 can interact with ESR1 AF-1 and AF-2 domains simultaneously and mediate their transcriptional synergy. Interacts with DDX5. Interacts with NCOA1; the interaction seems to require a self-association of N-terminal and C-terminal regions. Interacts with ZNF366, DDX17, NFKB1, RELA, SP1 and SP3. Interacts with NRIP1. Interacts with GPER1; the interaction occurs in an estrogen-dependent manner. Interacts with CLOCK and the interaction is stimulated by estrogen. Interacts with TRIP4 (ufmylated); estrogen dependent. Interacts with LMTK3; the interaction phosphorylates ESR1 (in vitro) and protects it against proteasomal degradation. Interacts with CCAR2 (via N-terminus) in a ligand-independent manner. Interacts with ZFHX3. Interacts with SFR1 in a ligand-dependent and -independent manner. Interacts with DCAF13, LATS1 and DCAF1; regulates ESR1 ubiquitination and ubiquitin-mediated proteasomal degradation. Interacts (via DNA-binding domain) with POU4F2 (C-terminus); this interaction increases the estrogen receptor ESR1 transcriptional activity in a DNA- and ligand 17-beta-estradiol-independent manner. Interacts with ESRRB isoform 1. Interacts with UBE3A and WBP2. Interacts with GTF2B. Interacts with RBM39. In the absence of hormonal ligand, interacts with TACC1. Interacts with PI3KR1 or PI3KR2 and PTK2/FAK1. Interacts with SRC. Interacts with BAG1; the interaction is promoted in the absence of estradiol (17-beta-estradiol/E2). Interacts with and ubiquitinated by STUB1; the interaction is promoted in the absence of estradiol (17-beta-estradiol/E2). Interacts with NEDD8. Post-translationally, phosphorylated by cyclin A/CDK2 and CK1. Phosphorylation probably enhances transcriptional activity. Dephosphorylation at Ser-118 by PPP5C inhibits its transactivation activity. Phosphorylated by LMTK3 (in vitro). Ubiquitinated; regulated by LATS1 via DCAF1 it leads to ESR1 proteasomal degradation. Deubiquitinated by OTUB1. Ubiquitinated by STUB1/CHIP; in the CA1 hippocampal region following loss of endogenous circulating estradiol (17-beta-estradiol/E2). Ubiquitinated by UBR5, leading to its degradation: UBR5 specifically recognizes and binds ligand-bound ESR1 when it is not associated with coactivators (NCOAs). In presence of NCOAs, the UBR5-degron is not accessible, preventing its ubiquitination and degradation. In terms of processing, palmitoylated at Cys-447 by ZDHHC7 and ZDHHC21. Palmitoylation is required for plasma membrane targeting and for rapid intracellular signaling via ERK and AKT kinases and cAMP generation, but not for signaling mediated by the nuclear hormone receptor. Post-translationally, dimethylated by PRMT1 at Arg-260. The methylation may favor cytoplasmic localization. Demethylated by JMJD6 at Arg-260.

It localises to the nucleus. Its subcellular location is the cytoplasm. The protein resides in the golgi apparatus. The protein localises to the cell membrane. In terms of biological role, nuclear hormone receptor. The steroid hormones and their receptors are involved in the regulation of eukaryotic gene expression and affect cellular proliferation and differentiation in target tissues. Ligand-dependent nuclear transactivation involves either direct homodimer binding to a palindromic estrogen response element (ERE) sequence or association with other DNA-binding transcription factors, such as AP-1/c-Jun, c-Fos, ATF-2, Sp1 and Sp3, to mediate ERE-independent signaling. Ligand binding induces a conformational change allowing subsequent or combinatorial association with multiprotein coactivator complexes through LXXLL motifs of their respective components. Mutual transrepression occurs between the estrogen receptor (ER) and NF-kappa-B in a cell-type specific manner. Decreases NF-kappa-B DNA-binding activity and inhibits NF-kappa-B-mediated transcription from the IL6 promoter and displace RELA/p65 and associated coregulators from the promoter. Recruited to the NF-kappa-B response element of the CCL2 and IL8 promoters and can displace CREBBP. Present with NF-kappa-B components RELA/p65 and NFKB1/p50 on ERE sequences. Can also act synergistically with NF-kappa-B to activate transcription involving respective recruitment adjacent response elements; the function involves CREBBP. Can activate the transcriptional activity of TFF1. Also mediates membrane-initiated estrogen signaling involving various kinase cascades. Essential for MTA1-mediated transcriptional regulation of BRCA1 and BCAS3. Maintains neuronal survival in response to ischemic reperfusion injury when in the presence of circulating estradiol (17-beta-estradiol/E2). The chain is Estrogen receptor (ESR1) from Sus scrofa (Pig).